A 98-amino-acid chain; its full sequence is Large ribosomal subunit protein eL30 (98 aa).

This sequence belongs to the eukaryotic ribosomal protein eL30 family.

This chain is Large ribosomal subunit protein eL30 (rpl30e), found in Methanothermobacter thermautotrophicus (strain ATCC 29096 / DSM 1053 / JCM 10044 / NBRC 100330 / Delta H) (Methanobacterium thermoautotrophicum).